An 88-amino-acid polypeptide reads, in one-letter code: Small ribosomal subunit protein bS21 (88 aa).

Residues Ala58–Arg88 are disordered. Positions Arg73 to Arg88 are enriched in low complexity.

It belongs to the bacterial ribosomal protein bS21 family.

This is Small ribosomal subunit protein bS21 from Mesorhizobium japonicum (strain LMG 29417 / CECT 9101 / MAFF 303099) (Mesorhizobium loti (strain MAFF 303099)).